The following is a 101-amino-acid chain: Urease subunit beta (101 aa).

This sequence belongs to the urease beta subunit family. In terms of assembly, heterotrimer of UreA (gamma), UreB (beta) and UreC (alpha) subunits. Three heterotrimers associate to form the active enzyme.

It localises to the cytoplasm. The catalysed reaction is urea + 2 H2O + H(+) = hydrogencarbonate + 2 NH4(+). Its pathway is nitrogen metabolism; urea degradation; CO(2) and NH(3) from urea (urease route): step 1/1. This is Urease subunit beta from Burkholderia pseudomallei (strain 668).